Consider the following 163-residue polypeptide: Phosphopantetheine adenylyltransferase (163 aa).

Ser9 is a binding site for substrate. ATP contacts are provided by residues 9–10 (SF) and His17. Positions 41, 73, and 87 each coordinate substrate. ATP is bound by residues 88–90 (GLR), Glu98, and 123–129 (YSYLSSS).

It belongs to the bacterial CoaD family. As to quaternary structure, homohexamer. Requires Mg(2+) as cofactor.

It is found in the cytoplasm. It catalyses the reaction (R)-4'-phosphopantetheine + ATP + H(+) = 3'-dephospho-CoA + diphosphate. It participates in cofactor biosynthesis; coenzyme A biosynthesis; CoA from (R)-pantothenate: step 4/5. Functionally, reversibly transfers an adenylyl group from ATP to 4'-phosphopantetheine, yielding dephospho-CoA (dPCoA) and pyrophosphate. The protein is Phosphopantetheine adenylyltransferase of Lachnoclostridium phytofermentans (strain ATCC 700394 / DSM 18823 / ISDg) (Clostridium phytofermentans).